The sequence spans 407 residues: Magnesium-protoporphyrin IX monomethyl ester [oxidative] cyclase 1, chloroplastic (407 aa).

Polar residues predominate over residues 1–10 (MQTTLKQQRA). Residues 1–28 (MQTTLKQQRASGRVSARQPFRSAAVARP) form a disordered region.

The protein belongs to the AcsF family. Requires Fe cation as cofactor.

It localises to the plastid. It is found in the chloroplast thylakoid membrane. The enzyme catalyses Mg-protoporphyrin IX 13-monomethyl ester + 3 NADPH + 3 O2 + 2 H(+) = 3,8-divinyl protochlorophyllide a + 3 NADP(+) + 5 H2O. Its pathway is porphyrin-containing compound metabolism; chlorophyll biosynthesis. In terms of biological role, catalyzes the formation of the isocyclic ring in chlorophyll biosynthesis under oxygen- and copper-deficient conditions. Mediates the cyclase reaction, which results in the formation of divinylprotochlorophyllide (Pchlide) characteristic of all chlorophylls from magnesium-protoporphyrin IX 13-monomethyl ester (MgPMME). The chain is Magnesium-protoporphyrin IX monomethyl ester [oxidative] cyclase 1, chloroplastic (CRD1) from Chlamydomonas reinhardtii (Chlamydomonas smithii).